The sequence spans 277 residues: Serine protease 33 (277 aa).

A signal peptide spans 1–24; the sequence is MRGASHLQILLLLVLGTRMQECAA. Residues 34 to 276 enclose the Peptidase S1 domain; sequence IVGGRDAQDG…YSPWIQARLS (243 aa). The cysteines at positions 59 and 75 are disulfide-linked. Active-site charge relay system residues include His-74 and Asp-123. 3 cysteine pairs are disulfide-bonded: Cys-157–Cys-234, Cys-190–Cys-213, and Cys-224–Cys-252. Ser-228 serves as the catalytic Charge relay system.

It belongs to the peptidase S1 family. In terms of processing, not glycosylated. In terms of tissue distribution, widely expressed.

The protein localises to the secreted. Serine protease that has amidolytic activity, cleaving its substrates before Arg residues. This Mus musculus (Mouse) protein is Serine protease 33 (Prss33).